The chain runs to 77 residues: uncharacterized protein (77 aa).

Disordered stretches follow at residues 1–34 (MSRA…TKMN) and 56–77 (LDGD…FSGR). A compositionally biased stretch (basic and acidic residues) spans 8–20 (DNDKGWAKKKGAD). Positions 25 to 34 (PRPHKQTKMN) are enriched in basic residues. Residues 56 to 70 (LDGDIRRGGNKKSER) are compositionally biased toward basic and acidic residues.

This is an uncharacterized protein from Dictyostelium discoideum (Social amoeba).